The primary structure comprises 307 residues: MPKKCRHLLQTSDLSLDEIKLLLNKASVYANDFNAVSLETKEKMHNKIIVALFFENSTRTVSSFEIASLRLGAKIVKLNMQTSSTSKGETLIDTFKNIHAMQPDAIITRHAFSSAPFKLAEFSQCPLINAGSGMSAHPTQALLDLLTLYQHFGGLENLKGKKIAFIGDVKNSRVANSNIKLLQRLGLEIMLCAPSSMLPSTPLRTTHNIEEAIAFADILMSLRTQTERHNAPIFASLKDYGNTYCITQKRLSTHAKNKEIIILHPGPVHRDIDIESAVLEDKRSKVLEQVKNGVAMRMAVLEFLLSD.

Carbamoyl phosphate-binding residues include arginine 59 and threonine 60. L-aspartate is bound at residue lysine 87. Positions 109, 137, and 140 each coordinate carbamoyl phosphate. Arginine 173 and arginine 223 together coordinate L-aspartate. Carbamoyl phosphate is bound by residues glycine 266 and proline 267.

This sequence belongs to the aspartate/ornithine carbamoyltransferase superfamily. ATCase family. As to quaternary structure, heterododecamer (2C3:3R2) of six catalytic PyrB chains organized as two trimers (C3), and six regulatory PyrI chains organized as three dimers (R2).

The enzyme catalyses carbamoyl phosphate + L-aspartate = N-carbamoyl-L-aspartate + phosphate + H(+). Its pathway is pyrimidine metabolism; UMP biosynthesis via de novo pathway; (S)-dihydroorotate from bicarbonate: step 2/3. In terms of biological role, catalyzes the condensation of carbamoyl phosphate and aspartate to form carbamoyl aspartate and inorganic phosphate, the committed step in the de novo pyrimidine nucleotide biosynthesis pathway. In Helicobacter pylori (strain G27), this protein is Aspartate carbamoyltransferase catalytic subunit.